Here is a 460-residue protein sequence, read N- to C-terminus: Elongation factor 1-alpha 3 (460 aa).

The 238-residue stretch at 6–243 (KTHINIVVIG…DCIIPPQRPT (238 aa)) folds into the tr-type G domain. The G1 stretch occupies residues 15 to 22 (GHVDSGKS). The G2 stretch occupies residues 71–75 (GITID). Residues 92-95 (DAPG) are G3. The tract at residues 154 to 157 (NKMD) is G4. The G5 stretch occupies residues 195–197 (SGF). 2 positions are modified to 5-glutamyl glycerylphosphorylethanolamine: E302 and E375.

Belongs to the TRAFAC class translation factor GTPase superfamily. Classic translation factor GTPase family. EF-Tu/EF-1A subfamily.

The protein resides in the cytoplasm. This protein promotes the GTP-dependent binding of aminoacyl-tRNA to the A-site of ribosomes during protein biosynthesis. This Oscheius tipulae protein is Elongation factor 1-alpha 3 (eft-3).